The chain runs to 601 residues: Serine/threonine-protein phosphatase 2A 65 kDa regulatory subunit A beta isoform (601 aa).

Ala2 is modified (N-acetylalanine). 15 HEAT repeats span residues 20–58 (DSLYPIAVLIDELRNEDVQLRLNSIKKLSTIALALGVER), 59–96 (TRTELLPFLTDTIYDEDEVLLALAEQLGNFTGLVGGPD), 97–135 (FAHCLLPPLESLATVEETVVRDKAVESLRQISQEHTPVA), 136–173 (LEAHFVPLVKRLASGDWFTSRTSACGLFSVCYPRASNA), 174–212 (VKAEIRQHFRSLCSDDTPMVRRAAASKLGEFAKVLELDS), 213–251 (VKTEIVPLFTNLASDEQDSVRLLAVEACVSIAQLLSQED), 252–290 (LEALVMPTLRQAAEDKSWRVRYMVADKFSELQKAVGPKI), 291–333 (ALSD…RETV), 334–372 (IMNQILPYIKELVSDTNQHVKSALASVIMGLSTVLGKEN), 373–411 (TIEHLLPLFLAQLKDECPEVRLNIISNLDCVNEVIGIRQ), 412–450 (LSQSLLPAIVELAEDAKWRVRLAIIEYMPLLAGQLGVEF), 451–489 (FDEKLNSLCMAWLVDHVYAIREAATNNLMKLVQKFGTEW), 490–528 (AQNTIVPKVLVMANDPNYLHRMTTLFCINALSEACGKEI), 529–567 (TTKQMLPIVLKMAGDQVANVRFNVAKSLQKIGPILDTNA), and 568–601 (LQGEVKPVLQKLGQDEDMDVKYFAQEAISVLALA).

It belongs to the phosphatase 2A regulatory subunit A family. As to quaternary structure, PP2A consists of a common heterodimeric core enzyme, composed of a 36 kDa catalytic subunit (subunit C) and a 65 kDa constant regulatory subunit (PR65 or subunit A), that associates with a variety of regulatory subunits. Proteins that associate with the core dimer include three families of regulatory subunits B (the R2/B/PR55/B55, R3/B''/PR72/PR130/PR59 and R5/B'/B56 families), the 48 kDa variable regulatory subunit, viral proteins, and cell signaling molecules. Interacts with IPO9. Interacts with SGO1. Interacts with RAF1.

Functionally, the PR65 subunit of protein phosphatase 2A serves as a scaffolding molecule to coordinate the assembly of the catalytic subunit and a variable regulatory B subunit. The polypeptide is Serine/threonine-protein phosphatase 2A 65 kDa regulatory subunit A beta isoform (Ppp2r1b) (Mus musculus (Mouse)).